Here is a 1553-residue protein sequence, read N- to C-terminus: DNA topoisomerase 2-alpha (1553 aa).

The tract at residues 1–25 is disordered; sequence MELLDSPAPLRPLHDNPRLPKADGA. Residues 12–25 are compositionally biased toward basic and acidic residues; sequence PLHDNPRLPKADGA. ATP-binding positions include Asn-92, Asn-121, 149-151, and 162-169; these read SSN and GRNGYGAK. Residues 343-345 form an interaction with DNA region; that stretch reads KKK. 377-379 contributes to the ATP binding site; it reads QTK. A Toprim domain is found at 456 to 573; sequence CTLILTEGDS…SLLRHNFLEE (118 aa). Mg(2+)-binding residues include Glu-462, Asp-542, and Asp-544. The 448-residue stretch at 716-1163 folds into the Topo IIA-type catalytic domain; the sequence is IPSLVDGLKP…SPSDLWKEDL (448 aa). Catalysis depends on Tyr-806, which acts as the O-(5'-phospho-DNA)-tyrosine intermediate. The segment at 991–1000 is interaction with DNA; the sequence is KLQTNLTCNS. Disordered regions lie at residues 1095 to 1114 and 1186 to 1553; these read QNKE…AATG and TGKP…DDMF. The segment covering 1098-1107 has biased composition (acidic residues); sequence EEEEGDESGE. Residues 1242–1262 show a composition bias toward basic and acidic residues; sequence SEKNESDEKQEGNSSGDKEPS. Acidic residues-rich tracts occupy residues 1300–1310 and 1334–1349; these read SESDSESDDFE and SDAD…EYQE. The span at 1371 to 1385 shows a compositional bias: basic and acidic residues; the sequence is VPKEKKGKAPKEKPL. The segment covering 1413–1432 has biased composition (low complexity); sequence PRAQAVPKKPAAAKKGSTAK. Residues 1444-1454 show a composition bias toward basic residues; it reads KKKAAPKAPRR. Low complexity predominate over residues 1517–1532; it reads SIDLTADSPAAAAPRT.

It belongs to the type II topoisomerase family. Homodimer. Mg(2+) is required as a cofactor. Mn(2+) serves as cofactor. Requires Ca(2+) as cofactor.

The protein localises to the cytoplasm. Its subcellular location is the nucleus. It is found in the nucleoplasm. The protein resides in the nucleolus. The enzyme catalyses ATP-dependent breakage, passage and rejoining of double-stranded DNA.. In terms of biological role, key decatenating enzyme that alters DNA topology by binding to two double-stranded DNA molecules, generating a double-stranded break in one of the strands, passing the intact strand through the broken strand, and religating the broken strand. May play a role in the regulation of circadian rhythm. In Gallus gallus (Chicken), this protein is DNA topoisomerase 2-alpha (TOP2A).